Here is a 385-residue protein sequence, read N- to C-terminus: Histidinol-phosphate aminotransferase (385 aa).

The residue at position 235 (Lys-235) is an N6-(pyridoxal phosphate)lysine.

The protein belongs to the class-II pyridoxal-phosphate-dependent aminotransferase family. Histidinol-phosphate aminotransferase subfamily. Homodimer. It depends on pyridoxal 5'-phosphate as a cofactor.

It catalyses the reaction L-histidinol phosphate + 2-oxoglutarate = 3-(imidazol-4-yl)-2-oxopropyl phosphate + L-glutamate. It functions in the pathway amino-acid biosynthesis; L-histidine biosynthesis; L-histidine from 5-phospho-alpha-D-ribose 1-diphosphate: step 7/9. This is Histidinol-phosphate aminotransferase from Nocardia farcinica (strain IFM 10152).